Reading from the N-terminus, the 66-residue chain is Cold shock protein CspB (66 aa).

Positions 4–63 constitute a CSD domain; it reads GKVKWFNNEKGYGFIEVEGGSDVFVHFTAIQGEGFKTLEEGQEVSFEIVQGNRGPQAANV.

In terms of assembly, homodimer.

It localises to the cytoplasm. Functionally, affects cell viability at low temperatures. The protein is Cold shock protein CspB (cspB) of Bacillus caldolyticus.